A 347-amino-acid polypeptide reads, in one-letter code: UDP-N-acetylglucosamine--N-acetylmuramyl-(pentapeptide) pyrophosphoryl-undecaprenol N-acetylglucosamine transferase (347 aa).

UDP-N-acetyl-alpha-D-glucosamine contacts are provided by residues 11-13 (TGG), Asn122, Arg163, Ser189, and Gln279.

It belongs to the glycosyltransferase 28 family. MurG subfamily.

The protein resides in the cell inner membrane. The catalysed reaction is di-trans,octa-cis-undecaprenyl diphospho-N-acetyl-alpha-D-muramoyl-L-alanyl-D-glutamyl-meso-2,6-diaminopimeloyl-D-alanyl-D-alanine + UDP-N-acetyl-alpha-D-glucosamine = di-trans,octa-cis-undecaprenyl diphospho-[N-acetyl-alpha-D-glucosaminyl-(1-&gt;4)]-N-acetyl-alpha-D-muramoyl-L-alanyl-D-glutamyl-meso-2,6-diaminopimeloyl-D-alanyl-D-alanine + UDP + H(+). It participates in cell wall biogenesis; peptidoglycan biosynthesis. In terms of biological role, cell wall formation. Catalyzes the transfer of a GlcNAc subunit on undecaprenyl-pyrophosphoryl-MurNAc-pentapeptide (lipid intermediate I) to form undecaprenyl-pyrophosphoryl-MurNAc-(pentapeptide)GlcNAc (lipid intermediate II). This Sulfurihydrogenibium sp. (strain YO3AOP1) protein is UDP-N-acetylglucosamine--N-acetylmuramyl-(pentapeptide) pyrophosphoryl-undecaprenol N-acetylglucosamine transferase.